Reading from the N-terminus, the 852-residue chain is Bifunctional heparan sulfate N-deacetylase/N-sulfotransferase 1 (852 aa).

Over 1 to 13 the chain is Cytoplasmic; that stretch reads MIITPYLNRKITR. The chain crosses the membrane as a helical; Signal-anchor for type II membrane protein span at residues 14 to 34; the sequence is PLKWILALIFLYLIYICLFSN. The interval 34 to 574 is heparan sulfate N-deacetylase 1; sequence NNSKPPKPRK…PRHHAILPPS (541 aa). The Lumenal segment spans residues 35 to 852; that stretch reads NSKPPKPRKK…WLEESVRIRA (818 aa). 7 N-linked (GlcNAc...) asparagine glycosylation sites follow: asparagine 50, asparagine 72, asparagine 261, asparagine 328, asparagine 377, asparagine 428, and asparagine 576. Residues 575 to 852 are heparan sulfate N-sulfotransferase 1; sequence INCTKKSLPD…WLEESVRIRA (278 aa). Catalysis depends on lysine 592, which acts as the For sulfotransferase activity. 592-596 lines the 3'-phosphoadenylyl sulfate pocket; that stretch reads KTGST. N-linked (GlcNAc...) asparagine glycosylation is present at asparagine 607. Serine 686 lines the 3'-phosphoadenylyl sulfate pocket. N-linked (GlcNAc...) asparagine glycosylation occurs at asparagine 712. Cysteine 789 and cysteine 798 form a disulfide bridge. 803-807 contacts 3'-phosphoadenylyl sulfate; sequence KGRKY.

It belongs to the sulfotransferase 1 family. NDST subfamily. Monomer. In terms of tissue distribution, present in some specific neurons in head and tail regions and muscles.

Its subcellular location is the golgi apparatus membrane. It catalyses the reaction alpha-D-glucosaminyl-[heparan sulfate](n) + 3'-phosphoadenylyl sulfate = N-sulfo-alpha-D-glucosaminyl-[heparan sulfate](n) + adenosine 3',5'-bisphosphate + 2 H(+). It participates in glycan metabolism; heparan sulfate biosynthesis. The protein operates within glycan metabolism; heparin biosynthesis. Essential bifunctional enzyme that catalyzes both the N-deacetylation and the N-sulfation of glucosamine (GlcNAc) of the glycosaminoglycan in heparan sulfate. Modifies the GlcNAc-GlcA disaccharide repeating sugar backbone to make N-sulfated heparosan, a prerequisite substrate for later modifications in heparin biosynthesis. This chain is Bifunctional heparan sulfate N-deacetylase/N-sulfotransferase 1 (hst-1), found in Caenorhabditis elegans.